A 310-amino-acid chain; its full sequence is Methionyl-tRNA formyltransferase (310 aa).

(6S)-5,6,7,8-tetrahydrofolate is bound at residue 111-114 (SILP).

The protein belongs to the Fmt family.

It catalyses the reaction L-methionyl-tRNA(fMet) + (6R)-10-formyltetrahydrofolate = N-formyl-L-methionyl-tRNA(fMet) + (6S)-5,6,7,8-tetrahydrofolate + H(+). Attaches a formyl group to the free amino group of methionyl-tRNA(fMet). The formyl group appears to play a dual role in the initiator identity of N-formylmethionyl-tRNA by promoting its recognition by IF2 and preventing the misappropriation of this tRNA by the elongation apparatus. The protein is Methionyl-tRNA formyltransferase of Finegoldia magna (strain ATCC 29328 / DSM 20472 / WAL 2508) (Peptostreptococcus magnus).